We begin with the raw amino-acid sequence, 300 residues long: Phosphatidylglycerol--prolipoprotein diacylglyceryl transferase (300 aa).

The next 7 membrane-spanning stretches (helical) occupy residues 17-37, 59-79, 94-114, 129-149, 204-224, 230-250, and 265-285; these read LAIR…LWFG, MLFY…VLFY, VWEG…AMML, FIAP…FING, SQIY…WLYA, MGAV…AAEF, and LSMG…MLVW. Arginine 142 provides a ligand contact to a 1,2-diacyl-sn-glycero-3-phospho-(1'-sn-glycerol).

The protein belongs to the Lgt family.

The protein localises to the cell inner membrane. The catalysed reaction is L-cysteinyl-[prolipoprotein] + a 1,2-diacyl-sn-glycero-3-phospho-(1'-sn-glycerol) = an S-1,2-diacyl-sn-glyceryl-L-cysteinyl-[prolipoprotein] + sn-glycerol 1-phosphate + H(+). It participates in protein modification; lipoprotein biosynthesis (diacylglyceryl transfer). Its function is as follows. Catalyzes the transfer of the diacylglyceryl group from phosphatidylglycerol to the sulfhydryl group of the N-terminal cysteine of a prolipoprotein, the first step in the formation of mature lipoproteins. This chain is Phosphatidylglycerol--prolipoprotein diacylglyceryl transferase, found in Ralstonia pickettii (strain 12J).